Consider the following 154-residue polypeptide: 6,7-dimethyl-8-ribityllumazine synthase (154 aa).

Residues F26, 60 to 62, and 84 to 86 contribute to the 5-amino-6-(D-ribitylamino)uracil site; these read ALE and CII. Residue 89 to 90 coordinates (2S)-2-hydroxy-3-oxobutyl phosphate; it reads ET. H92 (proton donor) is an active-site residue. N117 provides a ligand contact to 5-amino-6-(D-ribitylamino)uracil. R131 serves as a coordination point for (2S)-2-hydroxy-3-oxobutyl phosphate.

This sequence belongs to the DMRL synthase family.

It catalyses the reaction (2S)-2-hydroxy-3-oxobutyl phosphate + 5-amino-6-(D-ribitylamino)uracil = 6,7-dimethyl-8-(1-D-ribityl)lumazine + phosphate + 2 H2O + H(+). Its pathway is cofactor biosynthesis; riboflavin biosynthesis; riboflavin from 2-hydroxy-3-oxobutyl phosphate and 5-amino-6-(D-ribitylamino)uracil: step 1/2. Its function is as follows. Catalyzes the formation of 6,7-dimethyl-8-ribityllumazine by condensation of 5-amino-6-(D-ribitylamino)uracil with 3,4-dihydroxy-2-butanone 4-phosphate. This is the penultimate step in the biosynthesis of riboflavin. The polypeptide is 6,7-dimethyl-8-ribityllumazine synthase (Acidovorax ebreus (strain TPSY) (Diaphorobacter sp. (strain TPSY))).